Reading from the N-terminus, the 178-residue chain is Cell division protein ZapC (178 aa).

This sequence belongs to the ZapC family. In terms of assembly, interacts directly with FtsZ.

Its subcellular location is the cytoplasm. In terms of biological role, contributes to the efficiency of the cell division process by stabilizing the polymeric form of the cell division protein FtsZ. Acts by promoting interactions between FtsZ protofilaments and suppressing the GTPase activity of FtsZ. This is Cell division protein ZapC from Aeromonas hydrophila subsp. hydrophila (strain ATCC 7966 / DSM 30187 / BCRC 13018 / CCUG 14551 / JCM 1027 / KCTC 2358 / NCIMB 9240 / NCTC 8049).